Consider the following 98-residue polypeptide: Large ribosomal subunit protein bL27 (98 aa).

Residues 1 to 9 (MLKMNLQLF) constitute a propeptide that is removed on maturation.

This sequence belongs to the bacterial ribosomal protein bL27 family. In terms of processing, the N-terminus is cleaved by ribosomal processing cysteine protease Prp.

The protein is Large ribosomal subunit protein bL27 of Desulfitobacterium hafniense (strain DSM 10664 / DCB-2).